The sequence spans 129 residues: Large ribosomal subunit protein bL20 (129 aa).

This sequence belongs to the bacterial ribosomal protein bL20 family.

Binds directly to 23S ribosomal RNA and is necessary for the in vitro assembly process of the 50S ribosomal subunit. It is not involved in the protein synthesizing functions of that subunit. The protein is Large ribosomal subunit protein bL20 of Mycolicibacterium gilvum (strain PYR-GCK) (Mycobacterium gilvum (strain PYR-GCK)).